We begin with the raw amino-acid sequence, 256 residues long: CD209 antigen-like protein 2 (256 aa).

At 1-50 the chain is on the cytoplasmic side; the sequence is MSDSKEPRAQPLGLLEEEELITSSMNFFPRDFGFRQTRGYKSLAGCLGHA. The Endocytosis signal motif lies at 14-15; it reads LL. A helical; Signal-anchor for type II membrane protein transmembrane segment spans residues 51 to 71; the sequence is PLVLPLLFFTLFTGLLVAILV. Over 72–240 the chain is Extracellular; the sequence is QVSKNPSSQR…KSAASCSRDE (169 aa). 3 disulfide bridges follow: Cys-108–Cys-119, Cys-136–Cys-229, and Cys-208–Cys-221. The 117-residue stretch at 114–230 folds into the C-type lectin domain; it reads FFQGNCYFIS…CSAAKFWICK (117 aa). 6 residues coordinate Ca(2+): Glu-199, Asn-201, Ile-203, Glu-206, Asn-217, and Asp-218.

Predominantly expressed in liver and axillary lymph nodes. At very low levels also found in other tissues.

It is found in the membrane. Probable pathogen-recognition receptor involved in peripheral immune surveillance in liver. May mediate the endocytosis of pathogens which are subsequently degraded in lysosomal compartments. Probably recognizes in a calcium-dependent manner high mannose N-linked oligosaccharides in a variety of pathogen antigens. Is a receptor for ICAM3, probably by binding to mannose-like carbohydrates. The polypeptide is CD209 antigen-like protein 2 (CD209L2) (Macaca mulatta (Rhesus macaque)).